A 256-amino-acid polypeptide reads, in one-letter code: Ubiquinone/menaquinone biosynthesis C-methyltransferase UbiE (256 aa).

Over residues 1-12 the composition is skewed to basic and acidic residues; the sequence is MNDQRKGDHAEP. The segment at 1 to 23 is disordered; sequence MNDQRKGDHAEPTTHFGYQDVPE. S-adenosyl-L-methionine-binding positions include T79, D100, and 128–129; that span reads DA.

Belongs to the class I-like SAM-binding methyltransferase superfamily. MenG/UbiE family.

The enzyme catalyses a 2-demethylmenaquinol + S-adenosyl-L-methionine = a menaquinol + S-adenosyl-L-homocysteine + H(+). It carries out the reaction a 2-methoxy-6-(all-trans-polyprenyl)benzene-1,4-diol + S-adenosyl-L-methionine = a 5-methoxy-2-methyl-3-(all-trans-polyprenyl)benzene-1,4-diol + S-adenosyl-L-homocysteine + H(+). It participates in quinol/quinone metabolism; menaquinone biosynthesis; menaquinol from 1,4-dihydroxy-2-naphthoate: step 2/2. Its pathway is cofactor biosynthesis; ubiquinone biosynthesis. Its function is as follows. Methyltransferase required for the conversion of demethylmenaquinol (DMKH2) to menaquinol (MKH2) and the conversion of 2-polyprenyl-6-methoxy-1,4-benzoquinol (DDMQH2) to 2-polyprenyl-3-methyl-6-methoxy-1,4-benzoquinol (DMQH2). The protein is Ubiquinone/menaquinone biosynthesis C-methyltransferase UbiE of Pseudomonas putida (strain GB-1).